A 272-amino-acid chain; its full sequence is Replication-associated protein A (272 aa).

Positions 11 to 114 constitute a CRESS-DNA virus Rep endonuclease domain; it reads SHRNANTFLT…PLAVFERGTF (104 aa). The RCR-1 signature appears at 18-21; that stretch reads FLTY. Positions 52, 60, and 62 each coordinate a divalent metal cation. The RCR-2 signature appears at 60-62; sequence HLH. The active-site For DNA cleavage activity is Tyr100. Positions 100 to 103 match the RCR-3 motif; it reads YILK. Glu104 contacts a divalent metal cation. Residues 175 to 187 are oligomerization; it reads SANKLFPEIQEEF. The LXCXE motif, interaction with host RBR1 motif lies at 198–202; it reads LLCNE. A disordered region spans residues 245 to 272; that stretch reads SHQMKDQESRASTSSAQQEPENLLGPEA. The span at 254–264 shows a compositional bias: polar residues; sequence RASTSSAQQEP.

Belongs to the geminiviridae Rep protein family. Homooligomer. Interacts (via LXCXE domain) with host retinoblastoma-related protein 1 (RBR1), and may thereby deregulate the host cell cycle. Part of the C- and V-complexes which are RepA-Rep-DNA complexes involved in the c-sense and v-sense transcription. It depends on Mg(2+) as a cofactor. The cofactor is Mn(2+).

Its subcellular location is the host nucleus. It localises to the host cytoplasm. Its function is as follows. Implicated in enhancement of V-sense gene expression. Acts a an inhibitor of C-sense gene transcription. In Maize streak virus genotype A (isolate South Africa) (MSV), this protein is Replication-associated protein A.